Reading from the N-terminus, the 444-residue chain is Exodeoxyribonuclease 7 large subunit (444 aa).

Belongs to the XseA family. In terms of assembly, heterooligomer composed of large and small subunits.

The protein resides in the cytoplasm. The catalysed reaction is Exonucleolytic cleavage in either 5'- to 3'- or 3'- to 5'-direction to yield nucleoside 5'-phosphates.. Functionally, bidirectionally degrades single-stranded DNA into large acid-insoluble oligonucleotides, which are then degraded further into small acid-soluble oligonucleotides. This chain is Exodeoxyribonuclease 7 large subunit, found in Rickettsia canadensis (strain McKiel).